The chain runs to 474 residues: tRNA-2-methylthio-N(6)-dimethylallyladenosine synthase (474 aa).

The MTTase N-terminal domain occupies 3-120 (KKLHIKTWGC…LPEMINSVRG (118 aa)). Residues cysteine 12, cysteine 49, cysteine 83, cysteine 157, cysteine 161, and cysteine 164 each contribute to the [4Fe-4S] cluster site. The Radical SAM core domain maps to 143 to 375 (RAEGPTAFVS…QERINQQAMA (233 aa)). The 64-residue stretch at 378 to 441 (RRMLGTTQRI…PNSLRGKVVR (64 aa)) folds into the TRAM domain.

Belongs to the methylthiotransferase family. MiaB subfamily. Monomer. The cofactor is [4Fe-4S] cluster.

It is found in the cytoplasm. The catalysed reaction is N(6)-dimethylallyladenosine(37) in tRNA + (sulfur carrier)-SH + AH2 + 2 S-adenosyl-L-methionine = 2-methylsulfanyl-N(6)-dimethylallyladenosine(37) in tRNA + (sulfur carrier)-H + 5'-deoxyadenosine + L-methionine + A + S-adenosyl-L-homocysteine + 2 H(+). Functionally, catalyzes the methylthiolation of N6-(dimethylallyl)adenosine (i(6)A), leading to the formation of 2-methylthio-N6-(dimethylallyl)adenosine (ms(2)i(6)A) at position 37 in tRNAs that read codons beginning with uridine. This chain is tRNA-2-methylthio-N(6)-dimethylallyladenosine synthase, found in Salmonella paratyphi A (strain ATCC 9150 / SARB42).